The following is a 156-amino-acid chain: Arginine repressor (156 aa).

This sequence belongs to the ArgR family.

It localises to the cytoplasm. It participates in amino-acid biosynthesis; L-arginine biosynthesis [regulation]. Its function is as follows. Regulates arginine biosynthesis genes. In Salmonella paratyphi C (strain RKS4594), this protein is Arginine repressor.